The chain runs to 366 residues: 8-hydroxyquercetin 8-O-methyltransferase (366 aa).

S-adenosyl-L-methionine is bound by residues 207 to 210 (VGGG), 231 to 232 (DL), 251 to 252 (DM), and lysine 265. The active-site Proton acceptor is histidine 269.

This sequence belongs to the class I-like SAM-binding methyltransferase superfamily. Cation-independent O-methyltransferase family. COMT subfamily. As to quaternary structure, homodimer.

It catalyses the reaction 3,3',4',5,7,8-hexahydroxyflavone + S-adenosyl-L-methionine = 3,3',4',5,7-pentahydroxy-8-methoxyflavone + S-adenosyl-L-homocysteine + H(+). It carries out the reaction 4',7,8-trihydroxyflavone + S-adenosyl-L-methionine = 4',7-dihydroxy-8-methoxyflavone + S-adenosyl-L-homocysteine + H(+). The catalysed reaction is 8-hydroxy-7-methoxyflavone + S-adenosyl-L-methionine = 7,8-dimethoxyflavone + S-adenosyl-L-homocysteine + H(+). The protein operates within flavonoid metabolism. Its function is as follows. Flavonoid 8-O-methyltransferase involved in the biosynthesis of polymethoxylated flavonoids natural products such as pebrellin, aroma compounds which contribute to the flavor of peppermint, and exhibit pharmacological activities such as anti-allergic, anti-oxidant, antibacterial, anti-proliferative, and anti-inflammatory effects. Catalyzes S-adenosylmethionine-dependent regioselective 8-O-methylation of flavonoids; active on various hydroxylated flavonoid substrates, including 7,8,3'4'-tetrahydroxy-flavone, 7,8,4'-trihydroxy-flavone and 8-hydroxy-flavone 7-methyl ether. The chain is 8-hydroxyquercetin 8-O-methyltransferase from Mentha piperita (Peppermint).